Reading from the N-terminus, the 51-residue chain is Large ribosomal subunit protein bL33 (51 aa).

Belongs to the bacterial ribosomal protein bL33 family.

The polypeptide is Large ribosomal subunit protein bL33 (Methylococcus capsulatus (strain ATCC 33009 / NCIMB 11132 / Bath)).